We begin with the raw amino-acid sequence, 685 residues long: Phenoloxidase subunit 1 (685 aa).

A propeptide spanning residues 1–51 (MSDAKNNLLLFFDRPSEPCFMQKGEENAVFEIPDNYYPEKYQRVSNAIGNR) is cleaved from the precursor. The N-linked (GlcNAc...) asparagine glycan is linked to Asn-184. Residues His-209, His-213, and His-239 each contribute to the Cu cation site. Residues Asn-254 and Asn-324 are each glycosylated (N-linked (GlcNAc...) asparagine). Glu-351 acts as the Proton acceptor in catalysis. 3 residues coordinate Cu cation: His-366, His-370, and His-406. Asn-491 and Asn-540 each carry an N-linked (GlcNAc...) asparagine glycan. Disulfide bonds link Cys-581–Cys-623 and Cys-583–Cys-630.

As to quaternary structure, heterodimer. Cu(2+) serves as cofactor. The N-terminus is blocked. Synthesized by hemocytes and released into the hemolymph plasma.

The protein resides in the secreted. The catalysed reaction is 2 L-dopa + O2 = 2 L-dopaquinone + 2 H2O. It catalyses the reaction L-tyrosine + O2 = L-dopaquinone + H2O. Its function is as follows. This is a copper-containing oxidase that functions in the formation of pigments such as melanins and other polyphenolic compounds. Catalyzes the rate-limiting conversions of tyrosine to DOPA, DOPA to DOPA-quinone and possibly 5,6 dihydroxyindole to indole-5'6 quinone. The polypeptide is Phenoloxidase subunit 1 (Bombyx mori (Silk moth)).